Reading from the N-terminus, the 36-residue chain is Potassium channel toxin alpha-KTx 11.3 (36 aa).

Cystine bridges form between Cys-8/Cys-27, Cys-13/Cys-33, and Cys-17/Cys-35.

The protein belongs to the short scorpion toxin superfamily. Potassium channel inhibitor family. Alpha-KTx 11 subfamily. In terms of tissue distribution, expressed by the venom gland.

It is found in the secreted. Its function is as follows. Binds and inhibits voltage-sensitive potassium channels. Inhibits the vertebrate potassium channel Kv1.1/KCNA1 with low affinity. The chain is Potassium channel toxin alpha-KTx 11.3 from Parabuthus granulatus (Granulated thick-tailed scorpion).